Consider the following 418-residue polypeptide: Gene 68 protein (418 aa).

Disordered regions lie at residues Ile-230–Leu-304 and Asp-353–Ala-418. Residues Arg-241 to Pro-250 show a composition bias toward basic and acidic residues. A compositionally biased stretch (basic residues) spans Ser-257–Arg-266. Positions Asp-353–Arg-369 are enriched in basic and acidic residues. Residues Pro-395–Gly-404 are compositionally biased toward basic residues.

It belongs to the herpesviridae US2 family.

This is Gene 68 protein from Equine herpesvirus 1 (strain Ab4p) (EHV-1).